The following is a 475-amino-acid chain: Ribulose bisphosphate carboxylase large chain (475 aa).

Residues 1–2 constitute a propeptide that is removed on maturation; it reads MS. Position 3 is an N-acetylproline (proline 3). Lysine 14 carries the post-translational modification N6,N6,N6-trimethyllysine. 2 residues coordinate substrate: asparagine 123 and threonine 173. The active-site Proton acceptor is the lysine 175. Residue lysine 177 participates in substrate binding. Mg(2+) contacts are provided by lysine 201, aspartate 203, and glutamate 204. Lysine 201 bears the N6-carboxylysine mark. Histidine 294 functions as the Proton acceptor in the catalytic mechanism. Residues arginine 295, histidine 327, and serine 379 each contribute to the substrate site.

It belongs to the RuBisCO large chain family. Type I subfamily. In terms of assembly, heterohexadecamer of 8 large chains and 8 small chains. It depends on Mg(2+) as a cofactor.

The protein localises to the plastid. Its subcellular location is the chloroplast. The enzyme catalyses 2 (2R)-3-phosphoglycerate + 2 H(+) = D-ribulose 1,5-bisphosphate + CO2 + H2O. It carries out the reaction D-ribulose 1,5-bisphosphate + O2 = 2-phosphoglycolate + (2R)-3-phosphoglycerate + 2 H(+). Functionally, ruBisCO catalyzes two reactions: the carboxylation of D-ribulose 1,5-bisphosphate, the primary event in carbon dioxide fixation, as well as the oxidative fragmentation of the pentose substrate in the photorespiration process. Both reactions occur simultaneously and in competition at the same active site. This chain is Ribulose bisphosphate carboxylase large chain, found in Chlorella vulgaris (Green alga).